A 1226-amino-acid polypeptide reads, in one-letter code: Methionine synthase (1226 aa).

Residues 6-326 (RAQIEAQLKQ…EHIRHMAMAV (321 aa)) form the Hcy-binding domain. Zn(2+)-binding residues include C248, C311, and C312. The Pterin-binding domain occupies 357-618 (FVNVGERTNV…VPEKLREAVE (262 aa)). The region spanning 651–745 (SALEWRTWSV…FINASKQVGS (95 aa)) is the B12-binding N-terminal domain. Residues E695, 757–761 (GDVHD), H760, S805, T809, and A861 each bind methylcob(III)alamin. In terms of domain architecture, B12-binding spans 747 to 882 (NGKILLATVK…SDELRPAFVE (136 aa)). Residues 898-1226 (KKPRTKPVTL…EKWLGPNING (329 aa)) form the AdoMet activation domain. S-adenosyl-L-methionine contacts are provided by residues D948, R1136, and 1191 to 1192 (YF).

The protein belongs to the vitamin-B12 dependent methionine synthase family. It depends on methylcob(III)alamin as a cofactor. Zn(2+) serves as cofactor.

It carries out the reaction (6S)-5-methyl-5,6,7,8-tetrahydrofolate + L-homocysteine = (6S)-5,6,7,8-tetrahydrofolate + L-methionine. It functions in the pathway amino-acid biosynthesis; L-methionine biosynthesis via de novo pathway; L-methionine from L-homocysteine (MetH route): step 1/1. Functionally, catalyzes the transfer of a methyl group from methyl-cobalamin to homocysteine, yielding enzyme-bound cob(I)alamin and methionine. Subsequently, remethylates the cofactor using methyltetrahydrofolate. The protein is Methionine synthase (metH) of Vibrio vulnificus (strain YJ016).